A 223-amino-acid polypeptide reads, in one-letter code: Uridylate kinase (223 aa).

Residue 9 to 10 (GS) participates in ATP binding. Gly-43 provides a ligand contact to UMP. Positions 44 and 48 each coordinate ATP. Residues Asp-65 and 112–118 (THPGHTT) contribute to the UMP site. Residues Thr-137, Asn-138, Tyr-143, and Asp-146 each contribute to the ATP site.

This sequence belongs to the UMP kinase family. As to quaternary structure, homohexamer.

It localises to the cytoplasm. The catalysed reaction is UMP + ATP = UDP + ADP. It participates in pyrimidine metabolism; CTP biosynthesis via de novo pathway; UDP from UMP (UMPK route): step 1/1. With respect to regulation, inhibited by UTP. Catalyzes the reversible phosphorylation of UMP to UDP. This chain is Uridylate kinase, found in Methanopyrus kandleri (strain AV19 / DSM 6324 / JCM 9639 / NBRC 100938).